Consider the following 62-residue polypeptide: Sucrase-isomaltase, intestinal (62 aa).

The Cytoplasmic segment spans residues 2–12 (ARKKFSGLEIX). Ser-7 bears the Phosphoserine; by PKA mark. Residues 13–32 (LIVLFAIVLSIAIALVVVXA) form a helical; Signal-anchor for type II membrane protein membrane-spanning segment. The Lumenal portion of the chain corresponds to 33–38 (SKXPAV). A Sulfotyrosine modification is found at Tyr-59.

Belongs to the glycosyl hydrolase 31 family. As to quaternary structure, the resulting sucrase and isomaltase subunits stay associated with one another in a complex by non-covalent linkages. Post-translationally, the precursor is proteolytically cleaved when exposed to pancreatic proteases in the intestinal lumen. Sulfated.

Its subcellular location is the apical cell membrane. The enzyme catalyses Hydrolysis of sucrose and maltose by an alpha-D-glucosidase-type action.. It carries out the reaction Hydrolysis of (1-&gt;6)-alpha-D-glucosidic linkages in some oligosaccharides produced from starch and glycogen by alpha-amylase, and in isomaltose.. Plays an important role in the final stage of carbohydrate digestion. Isomaltase activity is specific for both alpha-1,4- and alpha-1,6-oligosaccharides. This Sus scrofa (Pig) protein is Sucrase-isomaltase, intestinal (SI).